Here is a 413-residue protein sequence, read N- to C-terminus: Histidine--tRNA ligase (413 aa).

The protein belongs to the class-II aminoacyl-tRNA synthetase family. Homodimer.

The protein localises to the cytoplasm. The catalysed reaction is tRNA(His) + L-histidine + ATP = L-histidyl-tRNA(His) + AMP + diphosphate + H(+). The chain is Histidine--tRNA ligase from Fusobacterium nucleatum subsp. nucleatum (strain ATCC 25586 / DSM 15643 / BCRC 10681 / CIP 101130 / JCM 8532 / KCTC 2640 / LMG 13131 / VPI 4355).